A 564-amino-acid chain; its full sequence is Kelch repeat and BTB domain-containing protein A55 (564 aa).

A BTB domain is found at 21–88 (CDISIVINDE…IYGIPLSLTN (68 aa)). Kelch repeat units lie at residues 252–297 (IELI…VLDN), 298–346 (IIYM…ADDE), 347–395 (YIYC…MLNG), 397–441 (IYVM…VHDG), 442–492 (KIYI…SAHN), and 494–539 (LYVG…CEPI).

It belongs to the poxviruses A55 protein family. As to quaternary structure, interacts (via BTB domain) with host CUL3.

It is found in the host cytoplasm. In terms of biological role, probable substrate-specific adapter of CUL3-containing E3 ubiquitin-protein ligases which mediate the ubiquitination and subsequent proteasomal degradation of host target proteins. The chain is Kelch repeat and BTB domain-containing protein A55 (KBTB1) from Bos taurus (Bovine).